The primary structure comprises 890 residues: Alanine--tRNA ligase (890 aa).

4 residues coordinate Zn(2+): histidine 568, histidine 572, cysteine 680, and histidine 684.

It belongs to the class-II aminoacyl-tRNA synthetase family. It depends on Zn(2+) as a cofactor.

The protein resides in the cytoplasm. The enzyme catalyses tRNA(Ala) + L-alanine + ATP = L-alanyl-tRNA(Ala) + AMP + diphosphate. In terms of biological role, catalyzes the attachment of alanine to tRNA(Ala) in a two-step reaction: alanine is first activated by ATP to form Ala-AMP and then transferred to the acceptor end of tRNA(Ala). Also edits incorrectly charged Ser-tRNA(Ala) and Gly-tRNA(Ala) via its editing domain. This Psychrobacter arcticus (strain DSM 17307 / VKM B-2377 / 273-4) protein is Alanine--tRNA ligase.